The sequence spans 355 residues: Holliday junction branch migration complex subunit RuvB (355 aa).

The segment at 4-190 is large ATPase domain (RuvB-L); that stretch reads TDKLAAERII…FGIVARLEFY (187 aa). Residues L29, R30, G71, K74, T75, T76, 137-139, R180, Y190, and R227 contribute to the ATP site; that span reads EDY. T75 contributes to the Mg(2+) binding site. Residues 191–261 are small ATPAse domain (RuvB-S); sequence DADQLSRIVQ…IADAALAMLD (71 aa). The segment at 264-355 is head domain (RuvB-H); the sequence is PVGFDLMDRK…QSIWDTPDAQ (92 aa). DNA is bound by residues R300, R319, and R324.

The protein belongs to the RuvB family. In terms of assembly, homohexamer. Forms an RuvA(8)-RuvB(12)-Holliday junction (HJ) complex. HJ DNA is sandwiched between 2 RuvA tetramers; dsDNA enters through RuvA and exits via RuvB. An RuvB hexamer assembles on each DNA strand where it exits the tetramer. Each RuvB hexamer is contacted by two RuvA subunits (via domain III) on 2 adjacent RuvB subunits; this complex drives branch migration. In the full resolvosome a probable DNA-RuvA(4)-RuvB(12)-RuvC(2) complex forms which resolves the HJ.

The protein localises to the cytoplasm. It catalyses the reaction ATP + H2O = ADP + phosphate + H(+). The RuvA-RuvB-RuvC complex processes Holliday junction (HJ) DNA during genetic recombination and DNA repair, while the RuvA-RuvB complex plays an important role in the rescue of blocked DNA replication forks via replication fork reversal (RFR). RuvA specifically binds to HJ cruciform DNA, conferring on it an open structure. The RuvB hexamer acts as an ATP-dependent pump, pulling dsDNA into and through the RuvAB complex. RuvB forms 2 homohexamers on either side of HJ DNA bound by 1 or 2 RuvA tetramers; 4 subunits per hexamer contact DNA at a time. Coordinated motions by a converter formed by DNA-disengaged RuvB subunits stimulates ATP hydrolysis and nucleotide exchange. Immobilization of the converter enables RuvB to convert the ATP-contained energy into a lever motion, pulling 2 nucleotides of DNA out of the RuvA tetramer per ATP hydrolyzed, thus driving DNA branch migration. The RuvB motors rotate together with the DNA substrate, which together with the progressing nucleotide cycle form the mechanistic basis for DNA recombination by continuous HJ branch migration. Branch migration allows RuvC to scan DNA until it finds its consensus sequence, where it cleaves and resolves cruciform DNA. The protein is Holliday junction branch migration complex subunit RuvB of Burkholderia multivorans (strain ATCC 17616 / 249).